The following is a 247-amino-acid chain: STING ER exit protein (247 aa).

Serine 127 carries the phosphoserine modification. Residues 195 to 216 (EAREIADSYANNARIIEKQLQR) adopt a coiled-coil conformation. Positions 215–247 (QRKGGKLSDVGIKTKTEDAPPPQKKQRGTLLER) are disordered.

Belongs to the STEEP1 family.

Its function is as follows. Molecular adapter that stimulates membrane curvature formation and subsequent endoplasmic reticulum exit site (ERES) establishment by recruiting PI3K complex I, leading to COPII vesicle-mediated transport. This chain is STING ER exit protein, found in Drosophila melanogaster (Fruit fly).